The following is a 300-amino-acid chain: Ubiquitin carboxyl-terminal hydrolase 2 (300 aa).

Positions 2–220 (SWTTIESDAG…IRFNLMVICK (219 aa)) constitute a UCH catalytic domain. Residue cysteine 83 is the Nucleophile of the active site. The active-site Proton donor is the histidine 159. The ULD domain maps to 261–290 (NFVGLFVELSKLLVKDRIDKNTWNSTLETA).

It belongs to the peptidase C12 family. Component of the 26S proteasome. Interacts with rpn10.

The protein localises to the nucleus. The catalysed reaction is Thiol-dependent hydrolysis of ester, thioester, amide, peptide and isopeptide bonds formed by the C-terminal Gly of ubiquitin (a 76-residue protein attached to proteins as an intracellular targeting signal).. Its function is as follows. Ubiquitin-protein hydrolase is involved both in the processing of ubiquitin precursors and of ubiquitinated proteins. This enzyme is a thiol protease that recognizes and hydrolyzes a peptide bond at the C-terminal glycine of ubiquitin. This Schizosaccharomyces pombe (strain 972 / ATCC 24843) (Fission yeast) protein is Ubiquitin carboxyl-terminal hydrolase 2 (uch2).